We begin with the raw amino-acid sequence, 312 residues long: Glyoxylate/hydroxypyruvate reductase A (312 aa).

Residue R227 is part of the active site. Catalysis depends on H275, which acts as the Proton donor.

The protein belongs to the D-isomer specific 2-hydroxyacid dehydrogenase family. GhrA subfamily.

Its subcellular location is the cytoplasm. It catalyses the reaction glycolate + NADP(+) = glyoxylate + NADPH + H(+). The enzyme catalyses (R)-glycerate + NAD(+) = 3-hydroxypyruvate + NADH + H(+). It carries out the reaction (R)-glycerate + NADP(+) = 3-hydroxypyruvate + NADPH + H(+). Catalyzes the NADPH-dependent reduction of glyoxylate and hydroxypyruvate into glycolate and glycerate, respectively. The chain is Glyoxylate/hydroxypyruvate reductase A from Escherichia coli O81 (strain ED1a).